Reading from the N-terminus, the 462-residue chain is Alkaline phosphatase 3 (462 aa).

The signal sequence occupies residues 1 to 32 (MKKFPKKLLPIAVLSSIAFSSLASGSVPEASA). A Mg(2+)-binding site is contributed by Asp-52. Residue Asp-52 coordinates Zn(2+). The active-site Phosphoserine intermediate is the Ser-101. Mg(2+) is bound by residues Thr-154 and Glu-275. Asp-280, His-284, Asp-322, His-323, and His-419 together coordinate Zn(2+).

The protein belongs to the alkaline phosphatase family. Monomer. The cofactor is Mg(2+). Requires Zn(2+) as cofactor.

The enzyme catalyses a phosphate monoester + H2O = an alcohol + phosphate. The protein is Alkaline phosphatase 3 (phoB) of Bacillus subtilis (strain 168).